The sequence spans 400 residues: Acetate kinase (400 aa).

Asparagine 10 contributes to the Mg(2+) binding site. Lysine 17 contacts ATP. Substrate is bound at residue arginine 91. The active-site Proton donor/acceptor is aspartate 150. Residues 210–214 (HLGNG), 285–287 (DCR), and 333–337 (GIGEN) contribute to the ATP site. Glutamate 387 is a Mg(2+) binding site.

The protein belongs to the acetokinase family. In terms of assembly, homodimer. Requires Mg(2+) as cofactor. The cofactor is Mn(2+).

The protein resides in the cytoplasm. It carries out the reaction acetate + ATP = acetyl phosphate + ADP. It participates in metabolic intermediate biosynthesis; acetyl-CoA biosynthesis; acetyl-CoA from acetate: step 1/2. Functionally, catalyzes the formation of acetyl phosphate from acetate and ATP. Can also catalyze the reverse reaction. This Photorhabdus laumondii subsp. laumondii (strain DSM 15139 / CIP 105565 / TT01) (Photorhabdus luminescens subsp. laumondii) protein is Acetate kinase.